A 115-amino-acid chain; its full sequence is Large ribosomal subunit protein uL18 (115 aa).

The protein belongs to the universal ribosomal protein uL18 family. Part of the 50S ribosomal subunit; part of the 5S rRNA/L5/L18/L25 subcomplex. Contacts the 5S and 23S rRNAs.

This is one of the proteins that bind and probably mediate the attachment of the 5S RNA into the large ribosomal subunit, where it forms part of the central protuberance. The chain is Large ribosomal subunit protein uL18 from Marinobacter nauticus (strain ATCC 700491 / DSM 11845 / VT8) (Marinobacter aquaeolei).